We begin with the raw amino-acid sequence, 31 residues long: Cytochrome b6-f complex subunit 6 (31 aa).

Residues Leu-3–Leu-23 traverse the membrane as a helical segment.

This sequence belongs to the PetL family. The 4 large subunits of the cytochrome b6-f complex are cytochrome b6, subunit IV (17 kDa polypeptide, PetD), cytochrome f and the Rieske protein, while the 4 small subunits are PetG, PetL, PetM and PetN. The complex functions as a dimer.

The protein localises to the plastid. It localises to the chloroplast thylakoid membrane. Its function is as follows. Component of the cytochrome b6-f complex, which mediates electron transfer between photosystem II (PSII) and photosystem I (PSI), cyclic electron flow around PSI, and state transitions. PetL is important for photoautotrophic growth as well as for electron transfer efficiency and stability of the cytochrome b6-f complex. The chain is Cytochrome b6-f complex subunit 6 from Porphyra purpurea (Red seaweed).